Reading from the N-terminus, the 495-residue chain is Glycerol kinase (495 aa).

Thr11 serves as a coordination point for ADP. Positions 11, 12, and 13 each coordinate ATP. Thr11 provides a ligand contact to sn-glycerol 3-phosphate. Arg15 contributes to the ADP binding site. Residues Arg81, Glu82, Tyr133, and Asp242 each coordinate sn-glycerol 3-phosphate. Glycerol contacts are provided by Arg81, Glu82, Tyr133, Asp242, and Gln243. ADP contacts are provided by Thr264 and Gly307. ATP-binding residues include Thr264, Gly307, Gln311, and Gly408. 2 residues coordinate ADP: Gly408 and Asn412.

This sequence belongs to the FGGY kinase family.

The enzyme catalyses glycerol + ATP = sn-glycerol 3-phosphate + ADP + H(+). Its pathway is polyol metabolism; glycerol degradation via glycerol kinase pathway; sn-glycerol 3-phosphate from glycerol: step 1/1. Its activity is regulated as follows. Inhibited by fructose 1,6-bisphosphate (FBP). Functionally, key enzyme in the regulation of glycerol uptake and metabolism. Catalyzes the phosphorylation of glycerol to yield sn-glycerol 3-phosphate. This chain is Glycerol kinase, found in Alkalilimnicola ehrlichii (strain ATCC BAA-1101 / DSM 17681 / MLHE-1).